The primary structure comprises 487 residues: RCC1 repeat-containing protein DDB_G0284033 (487 aa).

5 RCC1 repeats span residues Ser66–Tyr127, Arg207–Asn259, Asp260–Ser313, Asn373–Thr426, and Asp428–Ser483.

In Dictyostelium discoideum (Social amoeba), this protein is RCC1 repeat-containing protein DDB_G0284033.